A 279-amino-acid polypeptide reads, in one-letter code: Dehydrogenase/reductase SDR family member 4 (279 aa).

Residue Leu-37–Val-61 coordinates NADP(+). Lys-93 is modified (N6-acetyllysine; alternate). Lys-93 is subject to N6-succinyllysine; alternate. Lys-106 is modified (N6-acetyllysine). Ser-170 is a substrate binding site. Tyr-183 functions as the Proton acceptor in the catalytic mechanism. NADP(+) is bound at residue Lys-187. Residue Ser-221 is modified to Phosphoserine. The residue at position 235 (Lys-235) is an N6-succinyllysine. Residues Ser-277 to Leu-279 carry the Peroxisomal targeting signal motif.

It belongs to the short-chain dehydrogenases/reductases (SDR) family. As to quaternary structure, homotetramer.

Its subcellular location is the peroxisome. The enzyme catalyses a secondary alcohol + NADP(+) = a ketone + NADPH + H(+). The catalysed reaction is 3alpha-hydroxy-5beta-pregnan-20-one + NADP(+) = 5beta-pregnan-3,20-dione + NADPH + H(+). It catalyses the reaction 5beta-dihydrotestosterone + NADPH + H(+) = 5beta-androstane-3alpha,17beta-diol + NADP(+). It carries out the reaction all-trans-retinol + NADP(+) = all-trans-retinal + NADPH + H(+). The enzyme catalyses isatin + NADPH + H(+) = 3-hydroxyindolin-2-one + NADP(+). NADPH-dependent oxidoreductase which catalyzes the reduction of a variety of compounds bearing carbonyl groups including ketosteroids, alpha-dicarbonyl compounds, aldehydes, aromatic ketones and quinones. Reduces all-trans-retinal and 9-cis retinal. Reduces 3-ketosteroids and benzil into 3alpha-hydroxysteroids and S-benzoin, respectively, in contrast to the stereoselectivity of primates DHRS4s which produce 3beta-hydroxysteroids and R-benzoin. In the reverse reaction, catalyzes the NADP-dependent oxidation of 3alpha-hydroxysteroids and alcohol, but with much lower efficiency. Involved in the metabolism of 3alpha-hydroxysteroids, retinoid, isatin and xenobiotic carbonyl compounds. This chain is Dehydrogenase/reductase SDR family member 4 (DHRS4), found in Bos taurus (Bovine).